The primary structure comprises 201 residues: Glycerol-3-phosphate acyltransferase (201 aa).

5 consecutive transmembrane segments (helical) span residues 5–25 (LLGALLVAAGYLAGSIPFGVV), 55–75 (KMGVLVLVLDAAKAIVPILVA), 88–108 (WVTAVAVAAFVGHLFPVWLGF), 118–138 (LGIFAVLAPWAALAGLVGYAV), and 164–184 (TYGPRHPISWAGLAIALLIFL).

The protein belongs to the PlsY family. In terms of assembly, probably interacts with PlsX.

Its subcellular location is the cell inner membrane. The enzyme catalyses an acyl phosphate + sn-glycerol 3-phosphate = a 1-acyl-sn-glycero-3-phosphate + phosphate. Its pathway is lipid metabolism; phospholipid metabolism. In terms of biological role, catalyzes the transfer of an acyl group from acyl-phosphate (acyl-PO(4)) to glycerol-3-phosphate (G3P) to form lysophosphatidic acid (LPA). This enzyme utilizes acyl-phosphate as fatty acyl donor, but not acyl-CoA or acyl-ACP. This Anaeromyxobacter sp. (strain K) protein is Glycerol-3-phosphate acyltransferase.